The following is a 92-amino-acid chain: Large ribosomal subunit protein eL43 (92 aa).

Zn(2+) is bound by residues cysteine 39, cysteine 42, cysteine 57, and cysteine 60. The segment at 39 to 60 (CSFCGKTKMKRRAVGIWHCGSC) adopts a C4-type zinc-finger fold.

This sequence belongs to the eukaryotic ribosomal protein eL43 family. Component of the large ribosomal subunit.

The protein localises to the cytoplasm. Functionally, component of the large ribosomal subunit. The ribosome is a large ribonucleoprotein complex responsible for the synthesis of proteins in the cell. This Mus musculus (Mouse) protein is Large ribosomal subunit protein eL43 (Rpl37a).